Here is a 100-residue protein sequence, read N- to C-terminus: Small ribosomal subunit protein uS14 (100 aa).

The protein belongs to the universal ribosomal protein uS14 family. As to quaternary structure, part of the 30S ribosomal subunit. Contacts proteins S3 and S10.

Functionally, binds 16S rRNA, required for the assembly of 30S particles and may also be responsible for determining the conformation of the 16S rRNA at the A site. In Rippkaea orientalis (strain PCC 8801 / RF-1) (Cyanothece sp. (strain PCC 8801)), this protein is Small ribosomal subunit protein uS14.